The sequence spans 326 residues: Protoheme IX farnesyltransferase (326 aa).

The next 8 membrane-spanning stretches (helical) occupy residues 35–55 (LIPL…GWPL), 60–80 (LICT…LNCL), 106–126 (TAFI…VSGV), 129–149 (LAAG…TALL), 157–177 (IVVG…AATG), 185–205 (WLFA…ALLL), 238–258 (VLLS…YGLM), and 289–309 (WSIL…SALA).

The protein belongs to the UbiA prenyltransferase family. Protoheme IX farnesyltransferase subfamily.

Its subcellular location is the cell inner membrane. The enzyme catalyses heme b + (2E,6E)-farnesyl diphosphate + H2O = Fe(II)-heme o + diphosphate. Its pathway is porphyrin-containing compound metabolism; heme O biosynthesis; heme O from protoheme: step 1/1. Converts heme B (protoheme IX) to heme O by substitution of the vinyl group on carbon 2 of heme B porphyrin ring with a hydroxyethyl farnesyl side group. This Synechococcus sp. (strain CC9902) protein is Protoheme IX farnesyltransferase.